A 404-amino-acid chain; its full sequence is Phosphoglycerate kinase (404 aa).

Residues 21–23, R38, 61–64, R126, and R159 contribute to the substrate site; these read DFN and HLGR. ATP-binding positions include K210, E333, and 360–363; that span reads GGDS.

This sequence belongs to the phosphoglycerate kinase family. In terms of assembly, monomer.

The protein resides in the cytoplasm. It carries out the reaction (2R)-3-phosphoglycerate + ATP = (2R)-3-phospho-glyceroyl phosphate + ADP. Its pathway is carbohydrate degradation; glycolysis; pyruvate from D-glyceraldehyde 3-phosphate: step 2/5. The protein is Phosphoglycerate kinase of Acidobacterium capsulatum (strain ATCC 51196 / DSM 11244 / BCRC 80197 / JCM 7670 / NBRC 15755 / NCIMB 13165 / 161).